Reading from the N-terminus, the 402-residue chain is Multidrug resistance protein MdtH (402 aa).

A run of 10 helical transmembrane segments spans residues 13–33 (YFLL…FPLI), 34–54 (SIRF…ALGL), 99–116 (PWIL…GTLF), 139–159 (LLMM…SWLL), 165–185 (YVCW…AWLL), 214–234 (VLTL…LPIM), 244–264 (AVKW…YPIA), 277–297 (LMFG…STTL), 340–360 (LGLA…YDMG), and 368–388 (LPWA…YWQF).

It belongs to the major facilitator superfamily. DHA1 family. MdtH (TC 2.A.1.2.21) subfamily.

It is found in the cell inner membrane. This is Multidrug resistance protein MdtH from Edwardsiella ictaluri (strain 93-146).